The sequence spans 299 residues: Lysine exporter LysO (299 aa).

Helical transmembrane passes span 1-21 (MFSG…IPLR), 31-51 (QLLS…LAFL), 58-78 (LLAI…CNIA), 109-129 (LKLC…LAFL), 131-151 (HATE…GIQL), 169-189 (IVAV…AFIL), 207-227 (SLSG…AAFF), and 277-297 (PAAI…IAFF).

The protein belongs to the LysO family.

It is found in the cell inner membrane. Its function is as follows. Mediates export of lysine. This Escherichia coli (strain K12) protein is Lysine exporter LysO.